Here is a 391-residue protein sequence, read N- to C-terminus: Heme A synthase (391 aa).

8 helical membrane-spanning segments follow: residues 37–57, 121–141, 152–172, 186–206, 229–249, 298–318, 332–352, and 354–374; these read IRLW…VGGL, RQLG…FLAA, LLAL…MVAS, LATH…QALL, TTVL…VAGI, FLHR…WIFG, LLAM…LSAA, and WQVA…ILHA. H300 is a binding site for heme. H360 is a binding site for heme.

It belongs to the COX15/CtaA family. Type 2 subfamily. In terms of assembly, interacts with CtaB. It depends on heme b as a cofactor.

The protein resides in the cell membrane. The catalysed reaction is Fe(II)-heme o + 2 A + H2O = Fe(II)-heme a + 2 AH2. It participates in porphyrin-containing compound metabolism; heme A biosynthesis; heme A from heme O: step 1/1. Functionally, catalyzes the conversion of heme O to heme A by two successive hydroxylations of the methyl group at C8. The first hydroxylation forms heme I, the second hydroxylation results in an unstable dihydroxymethyl group, which spontaneously dehydrates, resulting in the formyl group of heme A. This is Heme A synthase from Cereibacter sphaeroides (strain KD131 / KCTC 12085) (Rhodobacter sphaeroides).